Consider the following 295-residue polypeptide: Translational activator of cytochrome c oxidase 1 (295 aa).

Lys162 is modified (N6-acetyllysine). Positions 190-225 (VEDREKKAVNLERALELAIEAGAEDVREAEDEEEEK) form a coiled coil.

The protein belongs to the TACO1 family.

Its subcellular location is the mitochondrion. Its function is as follows. Acts as a translational activator of mitochondrially-encoded cytochrome c oxidase 1. The sequence is that of Translational activator of cytochrome c oxidase 1 from Rattus norvegicus (Rat).